We begin with the raw amino-acid sequence, 820 residues long: Ribosome biogenesis protein ERB1 (820 aa).

A disordered region spans residues 1–111 (MVRSRSNSVK…SDAGDDEVDP (111 aa)). The segment covering 9–19 (VKKDLKRKVDE) has biased composition (basic and acidic residues). The span at 20-48 (PVDVQDEFDVEGLIDEGDSDDEDEAEQEV) shows a compositional bias: acidic residues. Positions 53–64 (VTKDKKNTSKTE) are enriched in basic and acidic residues. Residues 65–110 (NEEDADDESDSDAELEALIGEEEDLSGSELEDELAYFSDAGDDEVD) show a composition bias toward acidic residues. Residues 282-395 (RFIPSKHEAK…LRHVPGYSES (114 aa)) are required for interaction with NOP7. The required for interaction with YTM1 stretch occupies residues 395–431 (SVRERFERSLDLYLAPRVRKNKLNIDPDSLIPDLPSP). 2 WD repeats span residues 447–486 (GHKG…ELYR) and 495–535 (AQDD…FDIE). A disordered region spans residues 545–585 (GWGFAEGGREQQDIDTKGLDDDADSDSDDETGHVKKKSPPA). Over residues 551 to 564 (GGREQQDIDTKGLD) the composition is skewed to basic and acidic residues. WD repeat units follow at residues 604-646 (TATK…SQSP), 649-687 (KSKG…MAKK), 690-729 (PGAR…KPYK), 733-773 (YHEK…DMMT), and 789-820 (KSGL…LWTT).

Belongs to the WD repeat BOP1/ERB1 family. Component of the NOP7 complex, composed of ERB1, NOP7 and YTM1. The complex is held together by ERB1, which interacts with NOP7 via its N-terminal domain and with YTM1 via a high-affinity interaction between the seven-bladed beta-propeller domains of the 2 proteins. The NOP7 complex associates with the 66S pre-ribosome.

The protein resides in the nucleus. It is found in the nucleolus. Its subcellular location is the nucleoplasm. Component of the NOP7 complex, which is required for maturation of the 25S and 5.8S ribosomal RNAs and formation of the 60S ribosome. The sequence is that of Ribosome biogenesis protein ERB1 from Yarrowia lipolytica (strain CLIB 122 / E 150) (Yeast).